The chain runs to 689 residues: Methionine--tRNA ligase (689 aa).

A 'HIGH' region motif is present at residues 15–25 (PYANGPVHIGH). 4 residues coordinate Zn(2+): Cys-147, Cys-150, Cys-160, and Cys-163. The 'KMSKS' region motif lies at 342–346 (KISTS). Thr-345 provides a ligand contact to ATP. The tRNA-binding domain occupies 588 to 689 (DFAKMDIRVA…AVVNAGSMIG (102 aa)).

This sequence belongs to the class-I aminoacyl-tRNA synthetase family. MetG type 1 subfamily. Homodimer. Requires Zn(2+) as cofactor.

Its subcellular location is the cytoplasm. It catalyses the reaction tRNA(Met) + L-methionine + ATP = L-methionyl-tRNA(Met) + AMP + diphosphate. Its function is as follows. Is required not only for elongation of protein synthesis but also for the initiation of all mRNA translation through initiator tRNA(fMet) aminoacylation. The polypeptide is Methionine--tRNA ligase (Cytophaga hutchinsonii (strain ATCC 33406 / DSM 1761 / CIP 103989 / NBRC 15051 / NCIMB 9469 / D465)).